The following is a 161-amino-acid chain: Nucleotide-binding protein Bcenmc03_2579 (161 aa).

Belongs to the YajQ family.

Functionally, nucleotide-binding protein. The protein is Nucleotide-binding protein Bcenmc03_2579 of Burkholderia orbicola (strain MC0-3).